Here is a 478-residue protein sequence, read N- to C-terminus: Pyrrolysine--tRNA ligase (478 aa).

The interval 106 to 188 is disordered; it reads VMPKSVARTP…TSAMPASTSA (83 aa). Residues 122–132 are compositionally biased toward polar residues; sequence APVQTLPSESQ. Over residues 133 to 188 the composition is skewed to low complexity; sequence PAPTTPISASTTAPASTSTTAPAPASTTAPAPASTTAPASASTTISTSAMPASTSA.

It belongs to the class-II aminoacyl-tRNA synthetase family.

It is found in the cytoplasm. It catalyses the reaction tRNA(Pyl) + L-pyrrolysine + ATP = L-pyrrolysyl-tRNA(Pyl) + AMP + diphosphate. Functionally, catalyzes the attachment of pyrrolysine to tRNA(Pyl). Pyrrolysine is a lysine derivative encoded by the termination codon UAG. The chain is Pyrrolysine--tRNA ligase from Methanosarcina thermophila.